The sequence spans 416 residues: Gamma-glutamyl phosphate reductase (416 aa).

This sequence belongs to the gamma-glutamyl phosphate reductase family.

The protein resides in the cytoplasm. The catalysed reaction is L-glutamate 5-semialdehyde + phosphate + NADP(+) = L-glutamyl 5-phosphate + NADPH + H(+). It participates in amino-acid biosynthesis; L-proline biosynthesis; L-glutamate 5-semialdehyde from L-glutamate: step 2/2. Functionally, catalyzes the NADPH-dependent reduction of L-glutamate 5-phosphate into L-glutamate 5-semialdehyde and phosphate. The product spontaneously undergoes cyclization to form 1-pyrroline-5-carboxylate. In Salmonella agona (strain SL483), this protein is Gamma-glutamyl phosphate reductase.